Reading from the N-terminus, the 62-residue chain is Sperm protamine P1 (62 aa).

Residues 1–62 (MARYRRHSRS…RRYSRRRRRY (62 aa)) form a disordered region.

The protein belongs to the protamine P1 family. Testis.

The protein resides in the nucleus. It is found in the chromosome. Its function is as follows. Protamines substitute for histones in the chromatin of sperm during the haploid phase of spermatogenesis. They compact sperm DNA into a highly condensed, stable and inactive complex. This chain is Sperm protamine P1 (PRM1), found in Sminthopsis longicaudata (Long-tailed dunnart).